Here is a 1232-residue protein sequence, read N- to C-terminus: Protein transport protein sec-16A.1 (1232 aa).

Disordered stretches follow at residues G18–A134, R172–E193, P815–D843, K866–E942, Q972–Q1069, and P1140–D1232. Polar residues predominate over residues D26–S37. Positions R67–P76 are enriched in low complexity. Polar residues predominate over residues S78–N100. Positions Q817–S836 are enriched in polar residues. Positions S896 to T914 are enriched in low complexity. Polar residues-rich tracts occupy residues Q1046–T1060, S1149–S1159, and Y1168–A1178. Residues P1194 to P1203 show a composition bias toward low complexity. The segment covering P1222–D1232 has biased composition (polar residues).

It belongs to the SEC16 family. Interacts with tfg-1 (via N-terminus); the interaction is direct and is required for both the localization of tfg-1 and to maintain the distribution of sec-16A.1 at endoplasmic reticulum exit sites (ERES).

The protein localises to the endoplasmic reticulum. It localises to the endoplasmic reticulum-Golgi intermediate compartment. Its function is as follows. Plays a role in the organization of the endoplasmic reticulum exit sites (ERES), also known as transitional endoplasmic reticulum (tER). In association with tfg-1, accumulates at ERES to positively regulate secretory cargo trafficking from the endoplasmic reticulum to the endoplasmic reticulum-Golgi intermediate compartment (ERGIC) and Golgi apparatus. The protein is Protein transport protein sec-16A.1 of Caenorhabditis elegans.